The sequence spans 626 residues: Carnitine O-acetyltransferase (626 aa).

Lysine 93 is subject to N6-succinyllysine. Lysine 261 carries the post-translational modification N6-acetyllysine; alternate. An N6-succinyllysine; alternate modification is found at lysine 261. Position 268 is an N6-acetyllysine (lysine 268). Histidine 343 (proton acceptor) is an active-site residue. Residues lysine 419 and 423–430 (KSQKLSPD) contribute to the CoA site. The (R)-carnitine site is built by tyrosine 452 and serine 454. Serine 456 serves as a coordination point for CoA. Threonine 465 is a (R)-carnitine binding site. CoA-binding residues include arginine 504 and glutamine 555. The short motif at 624-626 (AKL) is the Microbody targeting signal element.

It belongs to the carnitine/choline acetyltransferase family. Monomer. As to expression, expressed in flagella of epididymal sperm.

It is found in the endoplasmic reticulum. The protein localises to the peroxisome. Its subcellular location is the mitochondrion inner membrane. It carries out the reaction (R)-carnitine + acetyl-CoA = O-acetyl-(R)-carnitine + CoA. It catalyses the reaction propanoyl-CoA + (R)-carnitine = O-propanoyl-(R)-carnitine + CoA. The enzyme catalyses butanoyl-CoA + (R)-carnitine = O-butanoyl-(R)-carnitine + CoA. The catalysed reaction is hexanoyl-CoA + (R)-carnitine = O-hexanoyl-(R)-carnitine + CoA. It carries out the reaction octanoyl-CoA + (R)-carnitine = O-octanoyl-(R)-carnitine + CoA. It catalyses the reaction decanoyl-CoA + (R)-carnitine = O-decanoyl-(R)-carnitine + CoA. The enzyme catalyses 3-methylbutanoyl-CoA + (R)-carnitine = O-3-methylbutanoyl-(R)-carnitine + CoA. The catalysed reaction is 2-methylpropanoyl-CoA + (R)-carnitine = O-isobutanoyl-(R)-carnitine + CoA. It carries out the reaction 2-methylbutanoyl-CoA + (R)-carnitine = O-2-methylbutanoyl-(R)-carnitine + CoA. It catalyses the reaction acetoacetyl-CoA + (R)-carnitine = O-3-oxobutanoyl-(R)-carnitine + CoA. The enzyme catalyses 3-hydroxybutanoyl-CoA + (R)-carnitine = O-3-hydroxybutanoyl-(R)-carnitine + CoA. The catalysed reaction is 4,8-dimethylnonanoyl-CoA + (R)-carnitine = O-4,8-dimethylnonanoyl-(R)-carnitine + CoA. It carries out the reaction 2,6-dimethylheptanoyl-CoA + (R)-carnitine = O-2,6-dimethylheptanoyl-(R)-carnitine + CoA. Catalyzes the reversible transfer of acyl groups from carnitine to coenzyme A (CoA) and regulates the acyl-CoA/CoA ratio. Also plays a crucial role in the transport of fatty acids for beta-oxidation. Responsible for the synthesis of short- and branched-chain acylcarnitines. Active towards some branched-chain amino acid oxidation pathway (BCAAO) intermediates. Trans-2-enoyl-CoAs and 2-methylacyl-CoAs are poor substrates. The polypeptide is Carnitine O-acetyltransferase (Rattus norvegicus (Rat)).